Here is a 594-residue protein sequence, read N- to C-terminus: Probable Xaa-Pro aminopeptidase P (594 aa).

Residues aspartate 391, aspartate 402, glutamate 500, and glutamate 514 each contribute to the Mn(2+) site.

The protein belongs to the peptidase M24B family. Mn(2+) is required as a cofactor.

It catalyses the reaction Release of any N-terminal amino acid, including proline, that is linked to proline, even from a dipeptide or tripeptide.. In terms of biological role, catalyzes the removal of a penultimate prolyl residue from the N-termini of peptides. The chain is Probable Xaa-Pro aminopeptidase P (ampp) from Pyrenophora tritici-repentis (strain Pt-1C-BFP) (Wheat tan spot fungus).